A 310-amino-acid polypeptide reads, in one-letter code: Methionyl-tRNA formyltransferase (310 aa).

Position 110 to 113 (110 to 113) interacts with (6S)-5,6,7,8-tetrahydrofolate; it reads SLLP.

Belongs to the Fmt family.

The catalysed reaction is L-methionyl-tRNA(fMet) + (6R)-10-formyltetrahydrofolate = N-formyl-L-methionyl-tRNA(fMet) + (6S)-5,6,7,8-tetrahydrofolate + H(+). In terms of biological role, attaches a formyl group to the free amino group of methionyl-tRNA(fMet). The formyl group appears to play a dual role in the initiator identity of N-formylmethionyl-tRNA by promoting its recognition by IF2 and preventing the misappropriation of this tRNA by the elongation apparatus. The polypeptide is Methionyl-tRNA formyltransferase (Streptomyces avermitilis (strain ATCC 31267 / DSM 46492 / JCM 5070 / NBRC 14893 / NCIMB 12804 / NRRL 8165 / MA-4680)).